The chain runs to 456 residues: Alcohol acyl transferase 1 allele GSc (456 aa).

Active-site proton acceptor residues include H165 and N386.

The protein belongs to the plant acyltransferase family. In terms of tissue distribution, expressed at very low levels in the skin of ripe fruit.

In terms of biological role, involved in the biosynthesis of volatile esters which confer ripe apple fruit flavor. Alcohol acyl transferase that can use a wide range of alcohols as substrate to produce esters. This is Alcohol acyl transferase 1 allele GSc from Malus domestica (Apple).